Reading from the N-terminus, the 450-residue chain is Phosphoglucosamine mutase (450 aa).

Serine 102 functions as the Phosphoserine intermediate in the catalytic mechanism. The Mg(2+) site is built by serine 102, aspartate 243, aspartate 245, and aspartate 247. Serine 102 carries the phosphoserine modification.

It belongs to the phosphohexose mutase family. Requires Mg(2+) as cofactor. Activated by phosphorylation.

It carries out the reaction alpha-D-glucosamine 1-phosphate = D-glucosamine 6-phosphate. Functionally, catalyzes the conversion of glucosamine-6-phosphate to glucosamine-1-phosphate. This is Phosphoglucosamine mutase from Agrobacterium fabrum (strain C58 / ATCC 33970) (Agrobacterium tumefaciens (strain C58)).